Consider the following 229-residue polypeptide: 2-C-methyl-D-erythritol 4-phosphate cytidylyltransferase (229 aa).

This sequence belongs to the IspD/TarI cytidylyltransferase family. IspD subfamily.

It catalyses the reaction 2-C-methyl-D-erythritol 4-phosphate + CTP + H(+) = 4-CDP-2-C-methyl-D-erythritol + diphosphate. The protein operates within isoprenoid biosynthesis; isopentenyl diphosphate biosynthesis via DXP pathway; isopentenyl diphosphate from 1-deoxy-D-xylulose 5-phosphate: step 2/6. Its function is as follows. Catalyzes the formation of 4-diphosphocytidyl-2-C-methyl-D-erythritol from CTP and 2-C-methyl-D-erythritol 4-phosphate (MEP). This is 2-C-methyl-D-erythritol 4-phosphate cytidylyltransferase from Clostridium botulinum (strain Langeland / NCTC 10281 / Type F).